A 379-amino-acid polypeptide reads, in one-letter code: Cobalt-precorrin-5B C(1)-methyltransferase (379 aa).

It belongs to the CbiD family.

The catalysed reaction is Co-precorrin-5B + S-adenosyl-L-methionine = Co-precorrin-6A + S-adenosyl-L-homocysteine. It functions in the pathway cofactor biosynthesis; adenosylcobalamin biosynthesis; cob(II)yrinate a,c-diamide from sirohydrochlorin (anaerobic route): step 6/10. Catalyzes the methylation of C-1 in cobalt-precorrin-5B to form cobalt-precorrin-6A. In Salmonella paratyphi B (strain ATCC BAA-1250 / SPB7), this protein is Cobalt-precorrin-5B C(1)-methyltransferase.